We begin with the raw amino-acid sequence, 138 residues long: Holo-[acyl-carrier-protein] synthase (138 aa).

Mg(2+)-binding residues include Asp-8 and Glu-56.

It belongs to the P-Pant transferase superfamily. AcpS family. Mg(2+) serves as cofactor.

It is found in the cytoplasm. The catalysed reaction is apo-[ACP] + CoA = holo-[ACP] + adenosine 3',5'-bisphosphate + H(+). Its function is as follows. Transfers the 4'-phosphopantetheine moiety from coenzyme A to a Ser of acyl-carrier-protein. This is Holo-[acyl-carrier-protein] synthase from Clostridium novyi (strain NT).